The primary structure comprises 334 residues: Eukaryotic translation initiation factor 3 subunit H (334 aa).

Residues 20-152 (VQCDGLAAMK…LKAYRLTPQA (133 aa)) form the MPN domain.

The protein belongs to the eIF-3 subunit H family. In terms of assembly, component of the eukaryotic translation initiation factor 3 (eIF-3) complex.

It is found in the cytoplasm. Its function is as follows. Component of the eukaryotic translation initiation factor 3 (eIF-3) complex, which is involved in protein synthesis of a specialized repertoire of mRNAs and, together with other initiation factors, stimulates binding of mRNA and methionyl-tRNAi to the 40S ribosome. The eIF-3 complex specifically targets and initiates translation of a subset of mRNAs involved in cell proliferation. In Anopheles gambiae (African malaria mosquito), this protein is Eukaryotic translation initiation factor 3 subunit H.